The following is a 370-amino-acid chain: DNA-directed RNA polymerase II subunit GRINL1A (370 aa).

Residues 1 to 20 are disordered; that stretch reads MSSLPRGFEPQTPEDLGQRS. A coiled-coil region spans residues 15-69; the sequence is DLGQRSLAELREMLKRQERLLRNVKFICKLPDKGKKISDAVTKLKAAIAEREEVR. The tract at residues 29–68 is important for transcription repressor activity; sequence KRQERLLRNVKFICKLPDKGKKISDAVTKLKAAIAEREEV. Disordered regions lie at residues 93 to 172, 204 to 226, and 241 to 283; these read DGDR…ASEG, DPTEHHSEGNRNPENLAGLWSGP, and KNPM…RRDR. The span at 101 to 131 shows a compositional bias: polar residues; sequence NSDQILDTSSPVPGCSSVANITSSQTTSRQQ. The segment covering 138-152 has biased composition (basic and acidic residues); it reads RGGDAEAAEAEHTVS. Residues 155–170 are compositionally biased toward low complexity; the sequence is PTSSSGAPAPSSSQAS. The span at 205–214 shows a compositional bias: basic and acidic residues; it reads PTEHHSEGNR. An interaction with Pol II region spans residues 228-299; sequence KKPHYMEVLE…TAARLLPLHH (72 aa). The segment covering 254 to 266 has biased composition (polar residues); it reads VLPSQPRDSSSAC. S271 bears the Phosphoserine mark. Positions 300 to 315 are important for transcription repressor activity; sequence LPTQLLSIEESLALQR. Residues 303–328 adopt a coiled-coil conformation; the sequence is QLLSIEESLALQRQQKQSYEEIQAKL. The tract at residues 316 to 341 is interaction with Pol II; it reads QQKQSYEEIQAKLAAQKLAERLNIKM. A disordered region spans residues 340–370; that stretch reads KMQSYNPEGESSRKYREVRDEDDDQSSEDEF. Residues 349–358 are compositionally biased toward basic and acidic residues; the sequence is ESSRKYREVR. Positions 359–370 are enriched in acidic residues; it reads DEDDDQSSEDEF.

It belongs to the GRINL1 family. As to quaternary structure, component of the Pol II(G) complex, which contains the RNA polymerase II (Pol II) core complex subunits and POLR2M and appears to be an abundant form of Pol II. Dephosphorylated at Ser-271 by the PNUTS-PP1 complex, promoting RNA polymerase II transcription pause-release.

It is found in the nucleus. In terms of biological role, appears to be a stable component of the Pol II(G) complex form of RNA polymerase II (Pol II). Pol II synthesizes mRNA precursors and many functional non-coding RNAs and is the central component of the basal RNA polymerase II transcription machinery. May play a role in Mediator complex-dependent regulation of transcription activation. Acts in vitro as a negative regulator of transcriptional activation; this repression is relieved by the Mediator complex, which restores Pol II(G) activator-dependent transcription to a level equivalent to that of Pol II. This chain is DNA-directed RNA polymerase II subunit GRINL1A (POLR2M), found in Bos taurus (Bovine).